We begin with the raw amino-acid sequence, 523 residues long: Cytochrome P450 52A3-A (523 aa).

Residues 17-34 (WYTILFGAAVTYFLSIAL) form a helical membrane-spanning segment. A heme-binding site is contributed by Cys471.

It belongs to the cytochrome P450 family. It depends on heme as a cofactor.

The protein resides in the membrane. Functionally, together with an NADPH cytochrome P450 the enzyme system catalyzes the terminal hydroxylation as the first step in the assimilation of alkanes and fatty acids. This chain is Cytochrome P450 52A3-A (CYP52A3-A), found in Candida maltosa (Yeast).